The sequence spans 658 residues: Threonine--tRNA ligase (658 aa).

The region spanning 1 to 61 (MSDVRVIIQR…KDGEEVEPVQ (61 aa)) is the TGS domain. Residues 259 to 554 (DHRKLGNELD…LLEHYAGAFP (296 aa)) are catalytic. Residues cysteine 353, histidine 404, and histidine 531 each contribute to the Zn(2+) site.

Belongs to the class-II aminoacyl-tRNA synthetase family. As to quaternary structure, homodimer. Requires Zn(2+) as cofactor.

Its subcellular location is the cytoplasm. The enzyme catalyses tRNA(Thr) + L-threonine + ATP = L-threonyl-tRNA(Thr) + AMP + diphosphate + H(+). Its function is as follows. Catalyzes the attachment of threonine to tRNA(Thr) in a two-step reaction: L-threonine is first activated by ATP to form Thr-AMP and then transferred to the acceptor end of tRNA(Thr). Also edits incorrectly charged L-seryl-tRNA(Thr). This chain is Threonine--tRNA ligase, found in Streptomyces avermitilis (strain ATCC 31267 / DSM 46492 / JCM 5070 / NBRC 14893 / NCIMB 12804 / NRRL 8165 / MA-4680).